The sequence spans 88 residues: MEIQLINIGFGNIVSANRVVAIVSPESAPIKRIITDARDKNQLIDATYGRRTRAVIITDSSHVILSAIQPETVANRFVISREHQSVEN.

Belongs to the RemA family.

In Trichormus variabilis (strain ATCC 29413 / PCC 7937) (Anabaena variabilis), this protein is Putative regulatory protein Ava_1474.